The sequence spans 528 residues: Protein MGF 505-7R (528 aa).

The protein belongs to the asfivirus MGF 505 family. As to quaternary structure, interacts with host STING1. Interacts with host JAK1; this interaction leads to JAK1 degradation. Interacts with host JAK2; this interaction leads to JAK2 degradation. Interacts with host RELA; this interaction inhibits NF-kappa-B promoter activity.

It localises to the host cytoplasm. Plays a role in virus cell tropism, and may be required for efficient virus replication in macrophages. Interferes with host NF-kappa-B promoter activity mediated by TLR8. Mechanistically, inhibits the phosphorylation and subsequent nuclear translocation of host NF-kappa-B RELA subunit downstream of TLR8. Promotes the expression of the autophagy-related protein host ULK1 to degrade host STING and inhibit the interferon response. Also inhibits JAK1- and JAK2-mediated signaling and thus negatively regulates the IFN-gamma signaling. This is Protein MGF 505-7R from African swine fever virus (isolate Pig/Kenya/KEN-50/1950) (ASFV).